The chain runs to 295 residues: Nucleotide-binding protein LACR_1047 (295 aa).

Residue 12 to 19 (GMSGAGKT) participates in ATP binding. 63-66 (DMRS) is a GTP binding site.

It belongs to the RapZ-like family.

Displays ATPase and GTPase activities. This Lactococcus lactis subsp. cremoris (strain SK11) protein is Nucleotide-binding protein LACR_1047.